Reading from the N-terminus, the 294-residue chain is Ribosomal RNA small subunit methyltransferase H (294 aa).

S-adenosyl-L-methionine contacts are provided by residues 36 to 38 (GGH), Asp-55, Phe-82, Asp-97, and Gln-104.

The protein belongs to the methyltransferase superfamily. RsmH family.

The protein resides in the cytoplasm. The catalysed reaction is cytidine(1402) in 16S rRNA + S-adenosyl-L-methionine = N(4)-methylcytidine(1402) in 16S rRNA + S-adenosyl-L-homocysteine + H(+). Specifically methylates the N4 position of cytidine in position 1402 (C1402) of 16S rRNA. This chain is Ribosomal RNA small subunit methyltransferase H, found in Synechococcus sp. (strain CC9605).